Consider the following 128-residue polypeptide: Large ribosomal subunit protein uL22 (128 aa).

This sequence belongs to the universal ribosomal protein uL22 family. In terms of assembly, part of the 50S ribosomal subunit.

In terms of biological role, this protein binds specifically to 23S rRNA; its binding is stimulated by other ribosomal proteins, e.g. L4, L17, and L20. It is important during the early stages of 50S assembly. It makes multiple contacts with different domains of the 23S rRNA in the assembled 50S subunit and ribosome. Functionally, the globular domain of the protein is located near the polypeptide exit tunnel on the outside of the subunit, while an extended beta-hairpin is found that lines the wall of the exit tunnel in the center of the 70S ribosome. In Rhodopseudomonas palustris (strain BisB18), this protein is Large ribosomal subunit protein uL22.